A 359-amino-acid chain; its full sequence is DNA polymerase IV (359 aa).

The region spanning 4–185 is the UmuC domain; sequence IIHIDMDCYF…LPLSKIPGVG (182 aa). Mg(2+)-binding residues include aspartate 8 and aspartate 103. Glutamate 104 is a catalytic residue.

The protein belongs to the DNA polymerase type-Y family. As to quaternary structure, monomer. Mg(2+) serves as cofactor.

The protein localises to the cytoplasm. The enzyme catalyses DNA(n) + a 2'-deoxyribonucleoside 5'-triphosphate = DNA(n+1) + diphosphate. Its function is as follows. Poorly processive, error-prone DNA polymerase involved in untargeted mutagenesis. Copies undamaged DNA at stalled replication forks, which arise in vivo from mismatched or misaligned primer ends. These misaligned primers can be extended by PolIV. Exhibits no 3'-5' exonuclease (proofreading) activity. May be involved in translesional synthesis, in conjunction with the beta clamp from PolIII. This is DNA polymerase IV from Shewanella frigidimarina (strain NCIMB 400).